We begin with the raw amino-acid sequence, 697 residues long: Serotransferrin (697 aa).

A signal peptide spans Met-1–Ala-19. Transferrin-like domains lie at Val-25–Glu-347 and Val-360–Lys-682. 2 disulfide bridges follow: Cys-28–Cys-67 and Cys-38–Cys-58. Arg-42 is subject to Dimethylated arginine. Residues Asp-82 and Tyr-114 each contribute to the Fe(3+) site. 8 disulfides stabilise this stretch: Cys-137–Cys-213, Cys-156–Cys-350, Cys-177–Cys-193, Cys-180–Cys-196, Cys-190–Cys-198, Cys-246–Cys-260, Cys-363–Cys-395, and Cys-373–Cys-386. 4 residues coordinate hydrogencarbonate: Thr-139, Arg-143, Ala-145, and Gly-146. Residue Tyr-207 participates in Fe(3+) binding. His-268 contacts Fe(3+). Position 388 is a phosphoserine (Ser-388). Asp-410 and Tyr-448 together coordinate Fe(3+). Disulfide bonds link Cys-420-Cys-692, Cys-435-Cys-655, Cys-472-Cys-543, Cys-496-Cys-683, Cys-506-Cys-520, Cys-517-Cys-526, Cys-583-Cys-597, and Cys-633-Cys-638. Hydrogencarbonate-binding residues include Thr-474, Arg-478, Ala-480, and Gly-481. N-linked (GlcNAc...) asparagine glycosylation occurs at Asn-513. Tyr-537 is a Fe(3+) binding site. A Fe(3+)-binding site is contributed by His-605. Ser-684 is modified (phosphoserine).

The protein belongs to the transferrin family. In terms of assembly, monomer. Part of a complex composed of SLC40A1/ferroportin, TF/transferrin and HEPH/hephaestin that transfers iron from cells to transferrin. As to expression, expressed by the liver and secreted in plasma.

Its subcellular location is the secreted. Its function is as follows. Transferrins are iron binding transport proteins which can bind two Fe(3+) ions in association with the binding of an anion, usually bicarbonate. It is responsible for the transport of iron from sites of absorption and heme degradation to those of storage and utilization. Serum transferrin may also have a further role in stimulating cell proliferation. The chain is Serotransferrin (Tf) from Mus musculus (Mouse).